The sequence spans 752 residues: Complement C2 (752 aa).

Residues 1 to 20 (MGPLMVLFCLLFLYPGLADS) form the signal peptide. Sushi domains are found at residues 22-86 (PSCP…VCKP), 87-146 (VRCP…VCDN), and 149-206 (GHCP…ICRQ). Cystine bridges form between Cys-24-Cys-64, Cys-51-Cys-84, Cys-89-Cys-131, Cys-117-Cys-144, Cys-151-Cys-191, and Cys-177-Cys-204. An N-linked (GlcNAc...) asparagine glycan is attached at Asn-29. An N-linked (GlcNAc...) asparagine glycan is attached at Asn-112. The VWFA domain maps to 254-452 (NLYLLLDCSQ…KALHQVFEHM (199 aa)). Residues 260-264 (DCSQS) carry the MIDAS-like motif motif. Mg(2+)-binding residues include Ser-262 and Ser-264. 2 N-linked (GlcNAc...) asparagine glycosylation sites follow: Asn-290 and Asn-333. Residue Thr-337 coordinates Mg(2+). Intrachain disulfides connect Cys-463-Cys-581, Cys-492-Cys-508, and Cys-584-Cys-600. The 281-residue stretch at 464-744 (GVGNMSANAS…MQPWLRQHLG (281 aa)) folds into the Peptidase S1 domain. Asn-467 and Asn-471 each carry an N-linked (GlcNAc...) asparagine glycan. Residues His-507 and Asp-561 each act as charge relay system in the active site. Residue Asn-621 is glycosylated (N-linked (GlcNAc...) asparagine). 2 disulfides stabilise this stretch: Cys-638–Cys-665 and Cys-675–Cys-705. The active-site Charge relay system is Ser-679.

It belongs to the peptidase S1 family. Serine protease component of the C3 convertase, also named C4bC2b, composed of the serine protease complement C2b and complement C4b. Serine protease component of the C5 convertase, also named C4bC2bC3b, composed of the serine protease complement C2b, complement C3b, as well as complement C4b. Requires Mg(2+) as cofactor. The cofactor is Mn(2+). Cleaved and activated by different proteases depending on the complement pathway to generate complement C2a and serine protease complement C2b chains. Cleaved and activated by C1S following activation by the classical complement system. Cleaved and activated by MASP2 following activation by the lectin complement system. Cleaved and activated by GZMK following activation by the GZMK complement system.

It is found in the secreted. Its subcellular location is the cell surface. It catalyses the reaction Selective cleavage of Arg-|-Ser bond in complement component C3 alpha-chain to form C3a and C3b, and Arg-|-Xaa bond in complement component C5 alpha-chain to form C5a and C5b.. In terms of biological role, precursor of the catalytic component of the C3 and C5 convertase complexes, which are part of the complement pathway, a cascade of proteins that leads to phagocytosis and breakdown of pathogens and signaling that strengthens the adaptive immune system. Component C2 is part of the classical, lectin and GZMK complement systems. Catalytic component of the complement C3 and C5 convertase complexes. Following complement activation, recruited to the surface of pathogens by complement C4b opsonin to form the C3 convertase, or C3b and C4b opsonins to form the C5 convertase. As part of the C3 convertase, cleaves and activate C3 into C3a anaphylatoxin and C3b opsonin, the next components of the complement pathways. As part of the C5 convertase, cleaves and activate C5 into C5a anaphylatoxin and C5b component of the membrane attack complex. This is Complement C2 from Pongo pygmaeus (Bornean orangutan).